Reading from the N-terminus, the 162-residue chain is Mitochondrial intermembrane space import and assembly protein 40 homolog (162 aa).

A disordered region spans residues 1 to 61 (MGQAQSDENS…DNENESLEAK (61 aa)). Positions 9–18 (NSIPTTTTTN) are enriched in low complexity. 3 disulfide bridges follow: C68–C70, C79–C112, and C89–C102. The CHCH domain maps to 76–120 (NGSCGSQFSEAFLCFLKSTAEEKGSDCVNPFVALQSCINANPDAF). Short sequence motifs (cx9C motif) lie at residues 79–89 (CGSQFSEAFLC) and 102–112 (CVNPFVALQSC). The segment at 119 to 162 (AFSKSVTGDEKETEKKEEQPPVQDHRIIPPLWAKDPPRSGNSKL) is disordered. Over residues 125-145 (TGDEKETEKKEEQPPVQDHRI) the composition is skewed to basic and acidic residues.

The protein localises to the mitochondrion intermembrane space. It is found in the peroxisome matrix. In terms of biological role, required for the import and folding of small cysteine-containing proteins in the mitochondrial intermembrane space. Involved in the mitochondrial oxidative folding of the copper-zinc superoxide dismutase CSD1, the copper chaperone for superoxide dismutase CCS, and subunits of the mitochondrial membrane respiratory chain NADH dehydrogenase (Complex I). Involved in the peroxisomal oxidative folding of the copper-zinc superoxide dismutase CSD3, and the fatty acid beta-oxidation multifunctional protein AIM1. This is Mitochondrial intermembrane space import and assembly protein 40 homolog from Arabidopsis thaliana (Mouse-ear cress).